The primary structure comprises 362 residues: S-adenosylmethionine decarboxylase proenzyme (362 aa).

Catalysis depends on residues E11 and E14. S71 acts as the Schiff-base intermediate with substrate; via pyruvic acid in catalysis. S71 bears the Pyruvic acid (Ser); by autocatalysis mark. The active-site Proton donor; for catalytic activity is the C85. Residues S234 and H247 each act as proton acceptor; for processing activity in the active site.

Belongs to the eukaryotic AdoMetDC family. Requires pyruvate as cofactor. In terms of processing, is synthesized initially as an inactive proenzyme. Formation of the active enzyme involves a self-maturation process in which the active site pyruvoyl group is generated from an internal serine residue via an autocatalytic post-translational modification. Two non-identical subunits are generated from the proenzyme in this reaction, and the pyruvate is formed at the N-terminus of the alpha chain, which is derived from the carboxyl end of the proenzyme. The post-translation cleavage follows an unusual pathway, termed non-hydrolytic serinolysis, in which the side chain hydroxyl group of the serine supplies its oxygen atom to form the C-terminus of the beta chain, while the remainder of the serine residue undergoes an oxidative deamination to produce ammonia and the pyruvoyl group blocking the N-terminus of the alpha chain.

It catalyses the reaction S-adenosyl-L-methionine + H(+) = S-adenosyl 3-(methylsulfanyl)propylamine + CO2. Its pathway is amine and polyamine biosynthesis; S-adenosylmethioninamine biosynthesis; S-adenosylmethioninamine from S-adenosyl-L-methionine: step 1/1. This Ipomoea nil (Japanese morning glory) protein is S-adenosylmethionine decarboxylase proenzyme (SAMDC).